We begin with the raw amino-acid sequence, 250 residues long: AA9 family lytic polysaccharide monooxygenase E (250 aa).

The first 21 residues, 1–21, serve as a signal peptide directing secretion; sequence MAMSKIMSLTGLLASASLVAG. Cu(2+) contacts are provided by H22 and H107. 2 cysteine pairs are disulfide-bonded: C77/C199 and C118/C122. N-linked (GlcNAc...) asparagine glycosylation occurs at N159. Positions 185 and 194 each coordinate O2. Y196 contributes to the Cu(2+) binding site.

It belongs to the polysaccharide monooxygenase AA9 family. Requires Cu(2+) as cofactor.

The protein localises to the secreted. It carries out the reaction [(1-&gt;4)-beta-D-glucosyl]n+m + reduced acceptor + O2 = 4-dehydro-beta-D-glucosyl-[(1-&gt;4)-beta-D-glucosyl]n-1 + [(1-&gt;4)-beta-D-glucosyl]m + acceptor + H2O.. Lytic polysaccharide monooxygenase (LPMO) that depolymerizes crystalline and amorphous polysaccharides via the oxidation of scissile alpha- or beta-(1-4)-glycosidic bonds, yielding C1 or C4 oxidation products. Catalysis by LPMOs requires the reduction of the active-site copper from Cu(II) to Cu(I) by a reducing agent and H(2)O(2) or O(2) as a cosubstrate. The protein is AA9 family lytic polysaccharide monooxygenase E of Aspergillus tamarii.